A 130-amino-acid polypeptide reads, in one-letter code: Small ribosomal subunit protein uS8 (130 aa).

This sequence belongs to the universal ribosomal protein uS8 family. As to quaternary structure, part of the 30S ribosomal subunit.

One of the primary rRNA binding proteins, it binds directly to 16S rRNA central domain where it helps coordinate assembly of the platform of the 30S subunit. The chain is Small ribosomal subunit protein uS8 from Halobacterium salinarum (strain ATCC 29341 / DSM 671 / R1).